The primary structure comprises 302 residues: Snake venom metalloprotease inhibitor 02A10 (302 aa).

The N-terminal stretch at 1-23 is a signal peptide; that stretch reads MSVSRLAASGLLLVSLLALALDG. Positions 24–47 are excised as a propeptide; that stretch reads KPVEKWSPWLWPPRPRPPIPPLQQ. The disordered stretch occupies residues 32–302; that stretch reads WLWPPRPRPP…CPKLPPSGGH (271 aa). The span at 33–44 shows a compositional bias: pro residues; sequence LWPPRPRPPIPP. Residue glutamine 48 is modified to Pyrrolidone carboxylic acid. Positions 51 to 58 are excised as a propeptide; sequence LDPPIPQQ. Glutamine 59 carries the post-translational modification Pyrrolidone carboxylic acid. Positions 62 to 69 are excised as a propeptide; the sequence is LDPPIPQQ. Glutamine 70 is modified (pyrrolidone carboxylic acid). Residues 73-80 constitute a propeptide that is removed on maturation; that stretch reads LDPPIPQQ. Residue glutamine 81 is modified to Pyrrolidone carboxylic acid. The propeptide occupies 84–91; that stretch reads LNPPIPQQ. Glutamine 92 is subject to Pyrrolidone carboxylic acid. Positions 95-102 are excised as a propeptide; it reads LDPPIPQQ. At glutamine 103 the chain carries Pyrrolidone carboxylic acid. A propeptide spanning residues 106-113 is cleaved from the precursor; it reads LNPPIPQQ. Glutamine 114 carries the post-translational modification Pyrrolidone carboxylic acid. A propeptide spanning residues 117–124 is cleaved from the precursor; the sequence is LNPPIPQQ. Glutamine 125 carries the pyrrolidone carboxylic acid modification. Residues 128-135 constitute a propeptide that is removed on maturation; it reads LNPPIPQQ. A Pyrrolidone carboxylic acid modification is found at glutamine 136. A propeptide spanning residues 139–146 is cleaved from the precursor; that stretch reads LNPPIPQQ. A Pyrrolidone carboxylic acid modification is found at glutamine 147. Residues 150 to 157 constitute a propeptide that is removed on maturation; that stretch reads LDPPIPQQ. Glutamine 158 is subject to Pyrrolidone carboxylic acid. The propeptide occupies 161–168; that stretch reads LDPPIPQQ. At glutamine 169 the chain carries Pyrrolidone carboxylic acid. Residues 172-179 constitute a propeptide that is removed on maturation; that stretch reads LDPPIPQQ. Glutamine 180 bears the Pyrrolidone carboxylic acid mark. Residues 183-190 constitute a propeptide that is removed on maturation; sequence LNPPIPQQ. Position 191 is a pyrrolidone carboxylic acid (glutamine 191). Residues 194–201 constitute a propeptide that is removed on maturation; sequence LDPPIPQQ. At glutamine 202 the chain carries Pyrrolidone carboxylic acid. Residues 205–212 constitute a propeptide that is removed on maturation; sequence LDPPIPQQ. At glutamine 213 the chain carries Pyrrolidone carboxylic acid. The propeptide occupies 216 to 223; that stretch reads LNPPIPQQ. Glutamine 224 carries the post-translational modification Pyrrolidone carboxylic acid. Residues 227–273 constitute a propeptide that is removed on maturation; sequence QRPLQPEVPSLMELHQERQKQGRMMHHDEDPGDAAEGPRRQKKEPGK. Composition is skewed to basic and acidic residues over residues 240-255 and 262-273; these read LHQE…HHDE and EGPRRQKKEPGK. Cysteine 279 and cysteine 293 form a disulfide bridge. The propeptide occupies 294–302; sequence PKLPPSGGH.

The protein in the C-terminal section; belongs to the natriuretic peptide family. Expressed by the venom gland.

Its subcellular location is the secreted. Its function is as follows. pEKW peptides may serve as metalloproteinase inhibitors during glandular storage. Their inhibition may be instantly disengaged, by dilution or physiochemical change, when venom is injected into tissue of the victim. Functionally, exhibits hypotensive and vasodepressor activity. Acts by activating natriuretic receptors (NPR1 and/or NPR2 and/or NPR3). The chain is Snake venom metalloprotease inhibitor 02A10 (Svmpi-Cce12) from Cerastes cerastes (Horned desert viper).